Reading from the N-terminus, the 1109-residue chain is Zinc finger E-box-binding homeobox 1 (1109 aa).

2 disordered regions span residues 1–106 (MADG…DPNV) and 123–143 (PEED…NGTP). The span at 15–30 (PRRNNVTNYNTVVEAN) shows a compositional bias: low complexity. 2 positions are modified to phosphoserine: serine 31 and serine 33. Residues 87–98 (VKDDECDSDAEN) are compositionally biased toward acidic residues. The segment at 150–173 (LTCPYCDRGYKRFTSLKEHIKYRH) adopts a C2H2-type 1 zinc-finger fold. Glycyl lysine isopeptide (Lys-Gly) (interchain with G-Cter in SUMO2) cross-links involve residues lysine 166 and lysine 175. 2 consecutive C2H2-type zinc fingers follow at residues 180–202 (FSCS…MTSH) and 220–242 (FKCT…LRIH). The C2H2-type 4; atypical zinc-finger motif lies at 248-272 (YECPNCKKRFSHSGSYSSHISSKKC). The interval 278–307 (VNGRPRSGLKTSQCSSPSLSTSPGSPTRPQ) is disordered. Lysine 287 is covalently cross-linked (Glycyl lysine isopeptide (Lys-Gly) (interchain with G-Cter in SUMO2)). Low complexity predominate over residues 288 to 304 (TSQCSSPSLSTSPGSPT). 2 positions are modified to phosphoserine: serine 293 and serine 302. Glycyl lysine isopeptide (Lys-Gly) (interchain with G-Cter in SUMO2) cross-links involve residues lysine 311 and lysine 315. A Glycyl lysine isopeptide (Lys-Gly) (interchain with G-Cter in SUMO); alternate cross-link involves residue lysine 327. Lysine 327 is covalently cross-linked (Glycyl lysine isopeptide (Lys-Gly) (interchain with G-Cter in SUMO2); alternate). Residues lysine 419, lysine 473, lysine 484, lysine 495, and lysine 528 each participate in a glycyl lysine isopeptide (Lys-Gly) (interchain with G-Cter in SUMO2) cross-link. 3 disordered regions span residues 468–501 (VPQN…KDKS), 525–566 (PELK…SQPP), and 614–711 (QIPG…PQVE). Basic and acidic residues predominate over residues 483–501 (CKSEKSPEDLTVKSEKDKS). The homeobox; atypical DNA-binding region spans 559-618 (DLSPSQPPLKNLLSLLKAYYALNAQPSTEELTKIADSVNLPLDVVKKWFEKMQAGQIPGQ). A compositionally biased stretch (polar residues) spans 654–665 (RGQSPLKMTSSP). 4 positions are modified to phosphoserine: serine 657, serine 664, serine 671, and serine 678. The span at 673–703 (INGSRSCTSSPSPLNLSSARNPQGYSCVSEG) shows a compositional bias: polar residues. Phosphothreonine is present on threonine 680. Phosphoserine is present on serine 682. Residue lysine 752 forms a Glycyl lysine isopeptide (Lys-Gly) (interchain with G-Cter in SUMO); alternate linkage. Lysine 752 is covalently cross-linked (Glycyl lysine isopeptide (Lys-Gly) (interchain with G-Cter in SUMO2); alternate). The segment at 834–873 (PPVKVIQPNGNQDERQDTSSEGVSVEDQNDSDCTPPKKKT) is disordered. 2 C2H2-type zinc fingers span residues 881–903 (YACD…KYEH) and 909–931 (HECG…MRLH). The C2H2-type 7; atypical zinc finger occupies 937-958 (YQCDKCGKRFSHSGSYSQHMNH). The segment at 968-1109 (EDRDAMEQED…RLSEEKTNEA (142 aa)) is disordered. The span at 1012–1066 (EEDEDSEKEEEEEDKEMEELQEDKECENPQEEEEEEEEEEEEEEEEEEEEAEEAE) shows a compositional bias: acidic residues. Low complexity predominate over residues 1071–1087 (AAKTGGAVEEEAAQQAG). Residues 1097-1109 (ESKRLSEEKTNEA) show a composition bias toward basic and acidic residues.

The protein belongs to the delta-EF1/ZFH-1 C2H2-type zinc-finger family. As to quaternary structure, interacts (via N-terminus) with SMARCA4/BRG1. Ubiquitinated, leading to degradation in a proteasome-dependent manner. Deubiquitinated by USP51, leading to stabilization.

The protein resides in the nucleus. In terms of biological role, acts as a transcriptional repressor. Binds to E-box sequences in the immunoglobulin heavy chain enhancer as well as in the regulatory regions of many other tissue-specific genes. Represses E-cadherin promoter and induces an epithelial-mesenchymal transition (EMT) by recruiting SMARCA4/BRG1. Represses BCL6 transcription in the presence of the corepressor CTBP1. Positively regulates neuronal differentiation. Represses RCOR1 transcription activation during neurogenesis. Represses transcription by binding to the E box (5'-CANNTG-3'). In the absence of TGFB1, acts as a repressor of COL1A2 transcription via binding to the E-box in the upstream enhancer region. In Rattus norvegicus (Rat), this protein is Zinc finger E-box-binding homeobox 1.